A 489-amino-acid polypeptide reads, in one-letter code: Mitochondrial-processing peptidase subunit beta (489 aa).

Residues 1-45 constitute a mitochondrion transit peptide; sequence MAAAAARVVLLPAARRRLWGFSESLLIRGAAGRSSYFGENRLRST. Position 101 (His-101) interacts with Zn(2+). The Proton acceptor role is filled by Glu-104. Residues His-105 and Glu-181 each coordinate Zn(2+).

Belongs to the peptidase M16 family. In terms of assembly, heterodimer of PMPCA (alpha) and PMPCB (beta) subunits, forming the mitochondrial processing protease (MPP) in which PMPCA is involved in substrate recognition and binding and PMPCB is the catalytic subunit. Requires Zn(2+) as cofactor.

It localises to the mitochondrion matrix. The enzyme catalyses Release of N-terminal transit peptides from precursor proteins imported into the mitochondrion, typically with Arg in position P2.. Binding to PMPCA is required for catalytic activity. Functionally, catalytic subunit of the essential mitochondrial processing protease (MPP), which cleaves the mitochondrial sequence off newly imported precursors proteins. Preferentially, cleaves after an arginine at position P2. Required for PINK1 turnover by coupling PINK1 mitochondrial import and cleavage, which results in subsequent PINK1 proteolysis. In Pongo abelii (Sumatran orangutan), this protein is Mitochondrial-processing peptidase subunit beta (PMPCB).